An 88-amino-acid chain; its full sequence is FXYD domain-containing ion transport regulator 3 (88 aa).

The first 20 residues, 1–20 (MQEFALSLLVLLAGLPTLDA), serve as a signal peptide directing secretion. At 21–38 (NDPEDKDSPFYYDWHSLR) the chain is on the extracellular side. A helical membrane pass occupies residues 39 to 59 (VGGLICAGILCALGIIVLMSG). The Cytoplasmic segment spans residues 60–88 (KCKCKFSQKPSHRPGDGPPLITPGSAHNC). The disordered stretch occupies residues 66-88 (SQKPSHRPGDGPPLITPGSAHNC).

Belongs to the FXYD family. As to quaternary structure, regulatory subunit of the sodium/potassium-transporting ATPase which is composed of a catalytic alpha subunit, a non-catalytic beta subunit and an additional regulatory subunit. Interacts with catalytic alpha subunit ATP1A1. Also interacts with non-catalytic beta subunit ATP1B1. Interacts with the alpha1-beta1, alpha2-beta1 and alpha3-beta1 NKA isozymes. Post-translationally, glutathionylated.

It is found in the cell membrane. In terms of biological role, associates with and regulates the activity of the sodium/potassium-transporting ATPase (NKA) which transports Na(+) out of the cell and K(+) into the cell. Reduces glutathionylation of the NKA beta-1 subunit ATP1B1, thus reversing glutathionylation-mediated inhibition of ATP1B1. Induces a hyperpolarization-activated chloride current when expressed in Xenopus oocytes. In Rattus norvegicus (Rat), this protein is FXYD domain-containing ion transport regulator 3 (Fxyd3).